Here is a 130-residue protein sequence, read N- to C-terminus: Methylglyoxal synthase (130 aa).

Positions 1 to 130 constitute an MGS-like domain; sequence MSTPRIALIA…DLARRLTANA (130 aa). Substrate-binding positions include His11, Lys15, 37 to 40, and 57 to 58; these read TGTT and SG. The active-site Proton donor/acceptor is the Asp63. His90 is a substrate binding site.

This sequence belongs to the methylglyoxal synthase family.

The catalysed reaction is dihydroxyacetone phosphate = methylglyoxal + phosphate. In terms of biological role, catalyzes the formation of methylglyoxal from dihydroxyacetone phosphate. In Burkholderia mallei (strain NCTC 10247), this protein is Methylglyoxal synthase.